A 562-amino-acid chain; its full sequence is Probable sesquiterpene synthase (562 aa).

Positions 315, 319, and 467 each coordinate Mg(2+). Residues 315–319 (DDIYD) carry the DDXXD motif motif.

This sequence belongs to the terpene synthase family. Tpsa subfamily. Mg(2+) is required as a cofactor. Requires Mn(2+) as cofactor.

Sesquiterpene synthase. In Santalum spicatum (Australian sandalwood), this protein is Probable sesquiterpene synthase (SesquiTPS).